The chain runs to 194 residues: 3-isopropylmalate dehydratase small subunit (194 aa).

This sequence belongs to the LeuD family. LeuD type 1 subfamily. As to quaternary structure, heterodimer of LeuC and LeuD.

It carries out the reaction (2R,3S)-3-isopropylmalate = (2S)-2-isopropylmalate. Its pathway is amino-acid biosynthesis; L-leucine biosynthesis; L-leucine from 3-methyl-2-oxobutanoate: step 2/4. Catalyzes the isomerization between 2-isopropylmalate and 3-isopropylmalate, via the formation of 2-isopropylmaleate. The protein is 3-isopropylmalate dehydratase small subunit of Brevibacillus brevis (strain 47 / JCM 6285 / NBRC 100599).